The chain runs to 554 residues: MTSEQPIPDITATPAWEALRKHHDQIGETHLRQIFADDPNRGHDLTVTVGDLYIDYSKHRITRDTISLLVDLARTANLEAHRDQMFAGAHINTSEDRAVLHTALRLPRDAELIVDGRNVVEDVHAVLDAMGDFTDRLRSGEWTGATGKRISTVVNIGIGGSDLGPVMVYQALRHYADAGISARFVSNVDPADLIATLADLDPATTLFIVASKTFSTLETLTNATAARRWLTDALGDAAVSQHFVAVSTNRRLVDDFGINTDNIFGFWDWVGGRYSVDSAIGLSVMAAIGREAFADFLSGFHIVDEHFRTAPPESNAPALLGLIGLWYSNFLGAQSRAVLPYSNDLARFAAYLQQLTMESNGKSTRADGTAVTTDTGEIYWGERGTNGQHAFYQLLHQGTRLVPADFIGFSQPIDDLPTVEGTGSMHDLLMSNFFAQTQVLAFGKTAEEIAAEGTPAAVVPHKVMPGNRPSTSILAKRLTPSVLGQLIAVYEHQVFTEGVVWGIDSFDQWGVELGKTQAKALLPVITSDGSPQRQSDSSTDALVRRYRTQRGRTG.

Glutamate 358 (proton donor) is an active-site residue. Catalysis depends on residues histidine 389 and lysine 515. Over residues 527-540 the composition is skewed to polar residues; the sequence is SDGSPQRQSDSSTD. The segment at 527–554 is disordered; the sequence is SDGSPQRQSDSSTDALVRRYRTQRGRTG. Positions 544-554 are enriched in basic residues; the sequence is RRYRTQRGRTG.

The protein belongs to the GPI family.

The protein localises to the cytoplasm. It carries out the reaction alpha-D-glucose 6-phosphate = beta-D-fructose 6-phosphate. It participates in carbohydrate biosynthesis; gluconeogenesis. The protein operates within carbohydrate degradation; glycolysis; D-glyceraldehyde 3-phosphate and glycerone phosphate from D-glucose: step 2/4. Its function is as follows. Catalyzes the reversible isomerization of glucose-6-phosphate to fructose-6-phosphate. The chain is Glucose-6-phosphate isomerase from Mycobacterium ulcerans (strain Agy99).